The primary structure comprises 312 residues: Olfactory receptor 6C70 (312 aa).

At M1–Q22 the chain is on the extracellular side. N3 is a glycosylation site (N-linked (GlcNAc...) asparagine). A helical transmembrane segment spans residues I23 to I43. The Cytoplasmic portion of the chain corresponds to I44 to N63. The helical transmembrane segment at F64–V84 threads the bilayer. The Extracellular portion of the chain corresponds to T85 to C95. C95 and C177 are joined by a disulfide. Residues I96–L116 traverse the membrane as a helical segment. Residues S117–Q141 are Cytoplasmic-facing. A helical transmembrane segment spans residues L142–L162. Residues N163–E194 are Extracellular-facing. The helical transmembrane segment at L195–S215 threads the bilayer. Residues Y216–S237 lie on the Cytoplasmic side of the membrane. A helical membrane pass occupies residues T238 to I258. Topologically, residues K259–V272 are extracellular. Residues T273 to L290 traverse the membrane as a helical segment. The Cytoplasmic segment spans residues R291–K312.

Belongs to the G-protein coupled receptor 1 family.

The protein localises to the cell membrane. Odorant receptor. This chain is Olfactory receptor 6C70 (OR6C70), found in Homo sapiens (Human).